The following is a 354-amino-acid chain: MVRFIEENITKMLETKAISNSEVLYVGGDDGDTSPTTKVLHDFQINSGGGLIRSWVDSMRACSPTRPKSFNSQSCWIKEHPSALNMFEEILHKSEGKQIVMFLDYDGTLSPIVDDPDRAFMSKKMRNTVRKLAKCFPTAIVSGRCREKVSSFVKLTELYYAGSHGMDIKGPEQGSKYKKENQSLLCQPATEFLPVINEVYKKLVENTQSIPGAKVENNKFCASVHFRCVEENKWSDLAHQVRSVLKNYPKLMLTQGRKVLEIRPIIKWDKGKALEFLLESLGYDNCTDVFPIYIGDDRTDEDAFKILRDKKQGLGILVSKYAKETNASYSLQEPDEVMVFLERLVEWKQSRCGA.

The protein belongs to the trehalose phosphatase family. The cofactor is a divalent metal cation.

The catalysed reaction is alpha,alpha-trehalose 6-phosphate + H2O = alpha,alpha-trehalose + phosphate. Its pathway is glycan biosynthesis; trehalose biosynthesis. Removes the phosphate from trehalose 6-phosphate to produce free trehalose. Trehalose accumulation in plant may improve abiotic stress tolerance. This chain is Probable trehalose-phosphate phosphatase E (TPPE), found in Arabidopsis thaliana (Mouse-ear cress).